The primary structure comprises 245 residues: DnaJ homolog subfamily B member 6-B (245 aa).

Residues 3–69 (EYYDVLGVQR…KKRDIYDKYG (67 aa)) form the J domain.

Homooligomer.

It is found in the cytoplasm. Its subcellular location is the perinuclear region. It localises to the nucleus. In terms of biological role, has a stimulatory effect on the ATPase activity of HSP70 in a dose-dependent and time-dependent manner and hence acts as a co-chaperone of HSP70. Plays an indispensable role in the organization of KRT8/KRT18 filaments. Acts as an endogenous molecular chaperone for neuronal proteins including huntingtin. Suppresses aggregation and toxicity of polyglutamine-containing, aggregation-prone proteins. Also reduces cellular toxicity and caspase-3 activity. In Xenopus laevis (African clawed frog), this protein is DnaJ homolog subfamily B member 6-B (dnajb6-b).